Consider the following 1460-residue polypeptide: DNA-binding protein RFX7 (1460 aa).

Positions 1 to 34 (MAEEQQQPPPQQPDAHQQLPPSAPNSGVALPALV) are disordered. The segment at residues 108-183 (AFSWIRNTLE…YCYSGLRKKA (76 aa)) is a DNA-binding region (RFX-type winged-helix). The PxLPxI/L motif; mediates interaction with ANKRA2 and RFXANK motif lies at 188–193 (PTLPNL). Residues 308 to 352 (QRKIQKKQQEQKLQSPLPGESAAKKSESATSNGVTNLPNGNPSIL) form a disordered region. Residue serine 322 is modified to Phosphoserine. A compositionally biased stretch (polar residues) spans 337–352 (TSNGVTNLPNGNPSIL). Phosphoserine is present on serine 379. Positions 404 to 416 (SVKQAPKTPQNVP) are enriched in polar residues. Residues 404-428 (SVKQAPKTPQNVPASPGGDRSARHR) are disordered. Phosphoserine is present on residues serine 418 and serine 455. Positions 481–513 (TPSNSNTPLKHSASVSSATGTTEESRSVPQIKN) are enriched in polar residues. Disordered stretches follow at residues 481–585 (TPSN…PSNE), 632–715 (TFTS…AQIP), and 917–1015 (QSVT…SVPP). The span at 515–535 (SVVSLQSPGSRSSSAGGTSAV) shows a compositional bias: low complexity. Positions 537–549 (VKVEPETSSDEHP) are enriched in basic and acidic residues. 2 stretches are compositionally biased toward polar residues: residues 563–583 (QTPS…QKPS) and 632–644 (TFTS…NGDS). Threonine 564 carries the post-translational modification Phosphothreonine. The residue at position 662 (serine 662) is a Phosphoserine. The residue at position 704 (lysine 704) is an N6-acetyllysine. 2 stretches are compositionally biased toward polar residues: residues 705–715 (TEGSTAGAQIP) and 917–933 (QSVT…SSTH). Positions 947-963 (TPTPTPTPTPTPTPTPT) are enriched in pro residues. The span at 971–1009 (GSQSLSRESPCSRLAQTTPVDSALGSSRHTPIGTPHSNC) shows a compositional bias: polar residues. Threonine 988 carries the post-translational modification Phosphothreonine. Phosphoserine is present on residues serine 1178 and serine 1329.

Belongs to the RFX family. In terms of assembly, interacts (via PxLPxI/L motif) with RFXANK (via ankyrin repeats). Interacts (via PxLPxI/L motif) with ANKRA2 (via ankyrin repeats). As to expression, widely expressed in many different tissue types including thymus and placenta, with high expression in brain. Expressed in both inhibitory and excitatory neurons in cortex.

It is found in the nucleus. Its function is as follows. Transcription factor. Acts as a transcriptional activator by binding to promoter regions of target genes, such as PDCD4, PIK3IP1, MXD4, PNRC1, and RFX5. Plays a role in natural killer (NK) cell maintenance and immunity. May play a role in the process of ciliogenesis in the neural tube and neural tube closure. The polypeptide is DNA-binding protein RFX7 (Homo sapiens (Human)).